Reading from the N-terminus, the 412-residue chain is Subtilisin-like protease 6 (412 aa).

The N-terminal stretch at 1–20 (MGFITKAIPIVLAALSTVNG) is a signal peptide. Residues 21–126 (ARILEAGPHA…VVRTTTNGTN (106 aa)) constitute a propeptide that is removed on maturation. One can recognise an Inhibitor I9 domain in the interval 36-120 (KYIVVMKREV…FIEPDFVVRT (85 aa)). N-linked (GlcNAc...) asparagine glycosylation is found at Asn123 and Asn126. Residues 135 to 412 (SWGLARVGSK…GKLIYNGSGK (278 aa)) enclose the Peptidase S8 domain. Active-site charge relay system residues include Asp167 and His198. Residues Asn252 and Asn264 are each glycosylated (N-linked (GlcNAc...) asparagine). Ser358 functions as the Charge relay system in the catalytic mechanism. An N-linked (GlcNAc...) asparagine glycan is attached at Asn408.

Belongs to the peptidase S8 family.

It is found in the secreted. Functionally, secreted subtilisin-like serine protease with keratinolytic activity that contributes to pathogenicity. The sequence is that of Subtilisin-like protease 6 (SUB6) from Trichophyton rubrum (Athlete's foot fungus).